Here is a 460-residue protein sequence, read N- to C-terminus: U-box domain-containing protein 9 (460 aa).

The region spanning 73-147 (SCPEEFRCPL…SKWCKKNGLE (75 aa)) is the U-box domain. ARM repeat units lie at residues 201-244 (TEFR…NISI), 248-287 (SNKK…TLSA), and 289-328 (DSNK…TLCI).

In terms of assembly, binds to SD11, SD16, SD17, SD18, SD113, SD129 and SD25. Post-translationally, phosphorylated by SD1-6 and SD1-7.

The protein resides in the nucleus. Its subcellular location is the cell membrane. The enzyme catalyses S-ubiquitinyl-[E2 ubiquitin-conjugating enzyme]-L-cysteine + [acceptor protein]-L-lysine = [E2 ubiquitin-conjugating enzyme]-L-cysteine + N(6)-ubiquitinyl-[acceptor protein]-L-lysine.. Its pathway is protein modification; protein ubiquitination. Functionally, functions as an E3 ubiquitin ligase. May be involved in the abscisic acid-mediated signaling pathway, at least during germination. This chain is U-box domain-containing protein 9 (PUB9), found in Arabidopsis thaliana (Mouse-ear cress).